A 363-amino-acid chain; its full sequence is Zinc phosphodiesterase ELAC protein 1 (363 aa).

Residues histidine 62, histidine 64, aspartate 66, histidine 67, histidine 182, aspartate 253, and histidine 313 each coordinate Zn(2+). Aspartate 66 (proton acceptor) is an active-site residue.

This sequence belongs to the RNase Z family. As to quaternary structure, homodimer. It depends on Zn(2+) as a cofactor. Widely expressed. Expressed in heart, brain, placenta, lung, liver, skeletal muscle, kidney and pancreas.

The protein resides in the cytoplasm. It is found in the cytosol. The protein localises to the nucleus. It carries out the reaction Endonucleolytic cleavage of RNA, removing extra 3' nucleotides from tRNA precursor, generating 3' termini of tRNAs. A 3'-hydroxy group is left at the tRNA terminus and a 5'-phosphoryl group is left at the trailer molecule.. Zinc phosphodiesterase, which displays some tRNA 3'-processing endonuclease activity. Specifically involved in tRNA repair: acts downstream of the ribosome-associated quality control (RQC) pathway by removing a 2',3'-cyclic phosphate from tRNAs following cleavage by ANKZF1. tRNAs are then processed by TRNT1. In Homo sapiens (Human), this protein is Zinc phosphodiesterase ELAC protein 1.